We begin with the raw amino-acid sequence, 431 residues long: Foot protein 1 variant 2 (431 aa).

A signal peptide spans 1–20 (MARNMNILTLFAVLLGSASA). At Tyr22 the chain carries 3',4'-dihydroxyphenylalanine. Pro33 is modified (4-hydroxyproline). The stretch at 41-50 (VPPPAWTAWK) is one A-1; approximate repeat. Positions 41–270 (VPPPAWTAWK…APPPAWTAWK (230 aa)) are 13 X 10 AA A-P-P-P-A-W-T-A-W-K. Residues Trp46, Trp49, Trp56, and Trp59 each carry the 7'-hydroxytryptophan modification. 4 C-linked (Man) hydroxytryptophan glycosylation sites follow: Trp46, Trp49, Trp56, and Trp59. The A-2; approximate repeat unit spans residues 51–60 (AHPPAWTAWK). Residues 61 to 70 (ATPKPWTAWK) form a B-1 repeat. Residues 61 to 310 (ATPKPWTAWK…ATPKPWTAWR (250 aa)) form a 27 X 10 AA A-T-P-K-P-W-T-A-W-K region. Pro65 is modified (4-hydroxyproline). C-linked (Man) tryptophan glycosylation is present at Trp66. Trp69 is modified (7'-hydroxytryptophan). Residue Trp69 is glycosylated (C-linked (Man) hydroxytryptophan). An A-3 repeat occupies 71–80 (APPPAWTAWK). 4-hydroxyproline occurs at positions 72, 73, and 74. A 7'-hydroxytryptophan mark is found at Trp76 and Trp79. C-linked (Man) hydroxytryptophan glycans are attached at residues Trp76 and Trp79. One copy of the B-2 repeat lies at 81–90 (ATPKPWTAWK). Pro85 bears the 4-hydroxyproline mark. Trp86 carries a C-linked (Man) tryptophan glycan. The residue at position 89 (Trp89) is a 7'-hydroxytryptophan. Trp89 carries C-linked (Man) hydroxytryptophan glycosylation. One copy of the A-4; approximate repeat lies at 91-100 (APPPTWTAWK). 3 positions are modified to 4-hydroxyproline: Pro92, Pro93, and Pro94. 2 positions are modified to 7'-hydroxytryptophan: Trp96 and Trp99. C-linked (Man) hydroxytryptophan glycans are attached at residues Trp96 and Trp99. A B-3 repeat occupies 101 to 110 (ATPKPWTAWK). A 4-hydroxyproline modification is found at Pro105. C-linked (Man) tryptophan glycosylation occurs at Trp106. Trp109 is subject to 7'-hydroxytryptophan. Trp109 carries C-linked (Man) hydroxytryptophan glycosylation. The A-5; approximate repeat unit spans residues 111–120 (APPPVWTAWK). 4-hydroxyproline occurs at positions 112, 113, and 114. 2 positions are modified to 7'-hydroxytryptophan: Trp116 and Trp119. Residues Trp116 and Trp119 are each glycosylated (C-linked (Man) hydroxytryptophan). The stretch at 121–130 (ATPKPRTAWK) is one B-4; approximate repeat. A 4-hydroxyproline modification is found at Pro125. Trp129 is subject to 7'-hydroxytryptophan. Trp129 is a glycosylation site (C-linked (Man) hydroxytryptophan). The A-6; approximate repeat unit spans residues 131-140 (APPPTWTAWK). 4-hydroxyproline occurs at positions 132, 133, and 134. Residues Trp136 and Trp139 each carry the 7'-hydroxytryptophan modification. C-linked (Man) hydroxytryptophan glycans are attached at residues Trp136 and Trp139. Residues 141-150 (AAPKPWTAWK) form a B-5; approximate repeat. Position 145 is a 4-hydroxyproline (Pro145). Trp146 is a glycosylation site (C-linked (Man) tryptophan). The residue at position 149 (Trp149) is a 7'-hydroxytryptophan. Trp149 carries a C-linked (Man) hydroxytryptophan glycan. The B-6 repeat unit spans residues 151–160 (ATPKPWTAWK). Residue Pro155 is modified to 4-hydroxyproline. C-linked (Man) tryptophan glycosylation is present at Trp156. Trp159 is subject to 7'-hydroxytryptophan. Trp159 carries C-linked (Man) hydroxytryptophan glycosylation. One copy of the A-7 repeat lies at 161 to 170 (APPPAWTAWK). Pro162, Pro163, and Pro164 each carry 4-hydroxyproline. Trp166 and Trp169 each carry 7'-hydroxytryptophan. 2 C-linked (Man) hydroxytryptophan glycosylation sites follow: Trp166 and Trp169. A B-7 repeat occupies 171–180 (ATPKPWTAWK). A 4-hydroxyproline modification is found at Pro175. The C-linked (Man) tryptophan glycan is linked to Trp176. Trp179 carries the post-translational modification 7'-hydroxytryptophan. Trp179 carries a C-linked (Man) hydroxytryptophan glycan. One copy of the B-8 repeat lies at 181–190 (ATPKPWTAWK). A 4-hydroxyproline modification is found at Pro185. Trp186 carries a C-linked (Man) tryptophan glycan. Residue Trp189 is modified to 7'-hydroxytryptophan. The C-linked (Man) hydroxytryptophan glycan is linked to Trp189. One copy of the B-9 repeat lies at 191–200 (ATPKPWTAWK). 4-hydroxyproline is present on Pro195. Trp196 carries a C-linked (Man) tryptophan glycan. A 7'-hydroxytryptophan modification is found at Trp199. Trp199 carries a C-linked (Man) hydroxytryptophan glycan. One copy of the B-10; approximate repeat lies at 201-210 (ATPKPWTVWK). 4-hydroxyproline is present on Pro205. C-linked (Man) tryptophan glycosylation is present at Trp206. At Trp209 the chain carries 7'-hydroxytryptophan. C-linked (Man) hydroxytryptophan glycosylation is present at Trp209. The stretch at 211 to 220 (ATPKPWTAWK) is one B-11 repeat. Pro215 bears the 4-hydroxyproline mark. A glycan (C-linked (Man) tryptophan) is linked at Trp216. Trp219 carries the 7'-hydroxytryptophan modification. The C-linked (Man) hydroxytryptophan glycan is linked to Trp219. An A-8 repeat occupies 221–230 (APPPAWTAWK). 4-hydroxyproline occurs at positions 222, 223, and 224. Trp226 and Trp229 each carry 7'-hydroxytryptophan. Residues Trp226 and Trp229 are each glycosylated (C-linked (Man) hydroxytryptophan). A B-12 repeat occupies 231–240 (ATPKPWTAWK). A 4-hydroxyproline modification is found at Pro235. A C-linked (Man) tryptophan glycan is attached at Trp236. The residue at position 239 (Trp239) is a 7'-hydroxytryptophan. Residue Trp239 is glycosylated (C-linked (Man) hydroxytryptophan). An A-9 repeat occupies 241-250 (APPPAWTAWK). 4-hydroxyproline is present on residues Pro242, Pro243, and Pro244. Residues Trp246 and Trp249 each carry the 7'-hydroxytryptophan modification. 2 C-linked (Man) hydroxytryptophan glycosylation sites follow: Trp246 and Trp249. The B-13 repeat unit spans residues 251–260 (ATPKPWTAWK). Pro255 is modified (4-hydroxyproline). Trp256 is a glycosylation site (C-linked (Man) tryptophan). Residue Trp259 is modified to 7'-hydroxytryptophan. C-linked (Man) hydroxytryptophan glycosylation is present at Trp259. One copy of the A-10 repeat lies at 261–270 (APPPAWTAWK). A 4-hydroxyproline mark is found at Pro262, Pro263, and Pro264. Trp266 and Trp269 each carry 7'-hydroxytryptophan. C-linked (Man) hydroxytryptophan glycosylation is found at Trp266 and Trp269. One copy of the B-14 repeat lies at 271 to 280 (ATPKPWTAWK). Pro275 bears the 4-hydroxyproline mark. C-linked (Man) tryptophan glycosylation is present at Trp276. 7'-hydroxytryptophan is present on Trp279. C-linked (Man) hydroxytryptophan glycosylation occurs at Trp279. One copy of the B-15 repeat lies at 281-290 (ATPKPWTAWK). A 4-hydroxyproline modification is found at Pro285. Trp286 is a glycosylation site (C-linked (Man) tryptophan). At Trp289 the chain carries 7'-hydroxytryptophan. The C-linked (Man) hydroxytryptophan glycan is linked to Trp289. A B-16 repeat occupies 291-300 (ATPKPWTAWK). Pro295 carries the post-translational modification 4-hydroxyproline. Trp296 carries C-linked (Man) tryptophan glycosylation. The residue at position 299 (Trp299) is a 7'-hydroxytryptophan. Trp299 is a glycosylation site (C-linked (Man) hydroxytryptophan). Residues 301–310 (ATPKPWTAWR) form a B-17; approximate repeat. Position 305 is a 4-hydroxyproline (Pro305). C-linked (Man) tryptophan glycosylation is present at Trp306. Position 309 is a 7'-hydroxytryptophan (Trp309). A C-linked (Man) hydroxytryptophan glycan is attached at Trp309. A disordered region spans residues 322–377 (GHGYGGYGKPGKPGKPGSKGPRGPAGPPGATGKTGRTGATGKRGPPGYPGKPGVPG). A compositionally biased stretch (gly residues) spans 323 to 332 (HGYGGYGKPG). Residues 329-380 (GKPGKPGKPGSKGPRGPAGPPGATGKTGRTGATGKRGPPGYPGKPGVPGRNG) form the Collagen-like domain. A compositionally biased stretch (low complexity) spans 336 to 366 (KPGSKGPRGPAGPPGATGKTGRTGATGKRGP). 4-hydroxyproline is present on residues Pro367, Pro370, and Pro376.

Produced by the byssal gland.

It localises to the secreted. Its function is as follows. Provides adhesiveness to the mussel's foot. Mussels produce one of the strongest water insoluble glues. The mussel's adhesive is a bundle of threads, called a byssus, formed by a fibrous collagenous core coated with adhesive proteins. The chain is Foot protein 1 variant 2 from Perna viridis (Asian green mussel).